We begin with the raw amino-acid sequence, 20 residues long: Antifreeze protein (20 aa).

N-glycosylated and O-glycosylated.

It is found in the secreted. The protein localises to the extracellular space. Antifreeze proteins bind to the surface of ice crystals and inhibit the growth of these crystals, this inhibition causes thermal hysteresis. Causes the shape of ice crystals to change from hexagonal to a bipyramidal shape with rugged facets. Inhibits recrystallization of ice crystals. This chain is Antifreeze protein, found in Antarctomyces psychrotrophicus.